The following is a 451-amino-acid chain: L,D-transpeptidase 5 (451 aa).

Residues 263–384 enclose the L,D-TPase catalytic domain; the sequence is QVVKAEVSSH…AVYGDPVEVT (122 aa). Residues Tyr323 and 337–338 each bind substrate; that span reads NG. The active-site Proton donor/acceptor is His342. Cys360 functions as the Nucleophile in the catalytic mechanism. Asn362 is a substrate binding site. The disordered stretch occupies residues 417–451; the sequence is AAKPAATQIPVTAPVTPSDAPTPSGTPTTTNGPGG. A compositionally biased stretch (low complexity) spans 437–451; the sequence is PTPSGTPTTTNGPGG.

The protein operates within cell wall biogenesis; peptidoglycan biosynthesis. With respect to regulation, in contrast to other LDT paralogs, LdtMt5 is not inactivated by the beta-lactam carbapenems; beta-lactam carbapenems form covalent adducts with other LDT paralogs but the formation of covalent adducts was not detected for LdtMt5. Functionally, generates 3-&gt;3 cross-links in peptidoglycan, catalyzing the cleavage of the mDap(3)-D-Ala(4) bond of a tetrapeptide donor stem and the formation of a bond between the carbonyl of mDap(3) of the donor stem and the side chain of mDap(3) of the acceptor stem. Is specific for donor substrates containing a stem tetrapeptide since it cannot use pentapeptide stems. This Mycobacterium tuberculosis (strain ATCC 25618 / H37Rv) protein is L,D-transpeptidase 5 (lprQ).